The sequence spans 1053 residues: Carbamoyl phosphate synthase large chain (1053 aa).

Positions 1-397 (MPKNTSLKKV…GFKKALRSLD (397 aa)) are carboxyphosphate synthetic domain. Residues Arg127, Arg167, Gly173, Gly174, Glu206, Val208, Glu213, Gly239, Val240, His241, Gln282, and Glu294 each contribute to the ATP site. The ATP-grasp 1 domain maps to 131–323 (KKLMLEIGEP…IARVAAKVAI (193 aa)). Mg(2+)-binding residues include Gln282, Glu294, and Asn296. Gln282, Glu294, and Asn296 together coordinate Mn(2+). The tract at residues 398–530 (TDIYRHTDLN…YSTWEQECEL (133 aa)) is oligomerization domain. The carbamoyl phosphate synthetic domain stretch occupies residues 531-919 (TQSDRKKILI…YKASQAADNT (389 aa)). The ATP-grasp 2 domain maps to 661 to 852 (SVLLDQNNIP…LAKIAAKLML (192 aa)). Arg697, Arg736, Leu738, Glu743, Gly768, Val769, His770, Ser771, Gln811, and Glu823 together coordinate ATP. Residues Gln811, Glu823, and Asn825 each coordinate Mg(2+). Gln811, Glu823, and Asn825 together coordinate Mn(2+). An MGS-like domain is found at 918-1053 (NTIPLKGNVF…TVEPLSHYHS (136 aa)). Residues 920 to 1053 (IPLKGNVFIS…TVEPLSHYHS (134 aa)) form an allosteric domain region.

Belongs to the CarB family. Composed of two chains; the small (or glutamine) chain promotes the hydrolysis of glutamine to ammonia, which is used by the large (or ammonia) chain to synthesize carbamoyl phosphate. Tetramer of heterodimers (alpha,beta)4. Requires Mg(2+) as cofactor. The cofactor is Mn(2+).

The catalysed reaction is hydrogencarbonate + L-glutamine + 2 ATP + H2O = carbamoyl phosphate + L-glutamate + 2 ADP + phosphate + 2 H(+). The enzyme catalyses hydrogencarbonate + NH4(+) + 2 ATP = carbamoyl phosphate + 2 ADP + phosphate + 2 H(+). It participates in amino-acid biosynthesis; L-arginine biosynthesis; carbamoyl phosphate from bicarbonate: step 1/1. It functions in the pathway pyrimidine metabolism; UMP biosynthesis via de novo pathway; (S)-dihydroorotate from bicarbonate: step 1/3. Large subunit of the glutamine-dependent carbamoyl phosphate synthetase (CPSase). CPSase catalyzes the formation of carbamoyl phosphate from the ammonia moiety of glutamine, carbonate, and phosphate donated by ATP, constituting the first step of 2 biosynthetic pathways, one leading to arginine and/or urea and the other to pyrimidine nucleotides. The large subunit (synthetase) binds the substrates ammonia (free or transferred from glutamine from the small subunit), hydrogencarbonate and ATP and carries out an ATP-coupled ligase reaction, activating hydrogencarbonate by forming carboxy phosphate which reacts with ammonia to form carbamoyl phosphate. The polypeptide is Carbamoyl phosphate synthase large chain (Methanocorpusculum labreanum (strain ATCC 43576 / DSM 4855 / Z)).